A 258-amino-acid polypeptide reads, in one-letter code: MTFIHPTAIVDPAAKLADDVKVGPWTYIGEGVEIGAGSVIESHVVLKGPTQIGCNNHIYQFSSVGEATPDLKYKGEPTKLIIGDNNIIREGVTLHRGTVQDRGETRIGNNNLLMAYVHVGHDSVVGNHCILVNNAALAGHVIVDDYAILGGFTLVHQFSRIGAYSFTGMGSAVGKDIPAFMMVAGAPAAARSINMEGLKRRGFSKDDIAKLNKSFKLIYRRGLTLEAAIEELTPLAQDCAAIVTLIASLRASKRGIVR.

The protein belongs to the transferase hexapeptide repeat family. LpxA subfamily. In terms of assembly, homotrimer.

It is found in the cytoplasm. The enzyme catalyses a (3R)-hydroxyacyl-[ACP] + UDP-N-acetyl-alpha-D-glucosamine = a UDP-3-O-[(3R)-3-hydroxyacyl]-N-acetyl-alpha-D-glucosamine + holo-[ACP]. It functions in the pathway glycolipid biosynthesis; lipid IV(A) biosynthesis; lipid IV(A) from (3R)-3-hydroxytetradecanoyl-[acyl-carrier-protein] and UDP-N-acetyl-alpha-D-glucosamine: step 1/6. Functionally, involved in the biosynthesis of lipid A, a phosphorylated glycolipid that anchors the lipopolysaccharide to the outer membrane of the cell. In Saccharophagus degradans (strain 2-40 / ATCC 43961 / DSM 17024), this protein is Acyl-[acyl-carrier-protein]--UDP-N-acetylglucosamine O-acyltransferase.